Reading from the N-terminus, the 487-residue chain is Malonate-semialdehyde dehydrogenase 2 (487 aa).

The NAD(+) site is built by Phe-154, Lys-178, Glu-181, Arg-182, and Ser-231. Cys-286 functions as the Nucleophile in the catalytic mechanism. Glu-386 contributes to the NAD(+) binding site.

This sequence belongs to the aldehyde dehydrogenase family. IolA subfamily. In terms of assembly, homotetramer.

The enzyme catalyses 3-oxopropanoate + NAD(+) + CoA + H2O = hydrogencarbonate + acetyl-CoA + NADH + H(+). It catalyses the reaction 2-methyl-3-oxopropanoate + NAD(+) + CoA + H2O = propanoyl-CoA + hydrogencarbonate + NADH + H(+). It participates in polyol metabolism; myo-inositol degradation into acetyl-CoA; acetyl-CoA from myo-inositol: step 7/7. In terms of biological role, catalyzes the oxidation of malonate semialdehyde (MSA) and methylmalonate semialdehyde (MMSA) into acetyl-CoA and propanoyl-CoA, respectively. Is involved in a myo-inositol catabolic pathway. Bicarbonate, and not CO2, is the end-product of the enzymatic reaction. The sequence is that of Malonate-semialdehyde dehydrogenase 2 from Bacillus thuringiensis (strain Al Hakam).